Consider the following 124-residue polypeptide: S-adenosylmethionine decarboxylase proenzyme (124 aa).

Serine 71 functions as the Schiff-base intermediate with substrate; via pyruvic acid in the catalytic mechanism. Serine 71 carries the pyruvic acid (Ser); by autocatalysis modification. Histidine 76 (proton acceptor; for processing activity) is an active-site residue. Cysteine 91 functions as the Proton donor; for catalytic activity in the catalytic mechanism.

It belongs to the prokaryotic AdoMetDC family. Type 1 subfamily. As to quaternary structure, heterotetramer of two alpha and two beta chains arranged as a dimer of alpha/beta heterodimers. Pyruvate serves as cofactor. In terms of processing, is synthesized initially as an inactive proenzyme. Formation of the active enzyme involves a self-maturation process in which the active site pyruvoyl group is generated from an internal serine residue via an autocatalytic post-translational modification. Two non-identical subunits are generated from the proenzyme in this reaction, and the pyruvate is formed at the N-terminus of the alpha chain, which is derived from the carboxyl end of the proenzyme. The post-translation cleavage follows an unusual pathway, termed non-hydrolytic serinolysis, in which the side chain hydroxyl group of the serine supplies its oxygen atom to form the C-terminus of the beta chain, while the remainder of the serine residue undergoes an oxidative deamination to produce ammonia and the pyruvoyl group blocking the N-terminus of the alpha chain.

The catalysed reaction is S-adenosyl-L-methionine + H(+) = S-adenosyl 3-(methylsulfanyl)propylamine + CO2. The protein operates within amine and polyamine biosynthesis; S-adenosylmethioninamine biosynthesis; S-adenosylmethioninamine from S-adenosyl-L-methionine: step 1/1. Competitively inhibited by methylglyoxal bis-guanylhydrazone. Irreversibly inhibited by NaBH(4) in vitro. Its function is as follows. Catalyzes the decarboxylation of S-adenosylmethionine to S-adenosylmethioninamine (dcAdoMet), the propylamine donor required for the synthesis of the polyamines spermine and spermidine from the diamine putrescine. Has no arginine decarboxylase (ArgDC) activity. The chain is S-adenosylmethionine decarboxylase proenzyme (speH) from Saccharolobus solfataricus (strain ATCC 35092 / DSM 1617 / JCM 11322 / P2) (Sulfolobus solfataricus).